We begin with the raw amino-acid sequence, 274 residues long: uncharacterized protein (274 aa).

An N-terminal signal peptide occupies residues 1-17; the sequence is MKKLLAGFLTLSLALAA. A lipid anchor (N-palmitoyl cysteine) is attached at C18. C18 is lipidated: S-diacylglycerol cysteine. The interval 18–169 is disordered; the sequence is CSNGSDDDSS…DANNGASSAN (152 aa). A compositionally biased stretch (basic and acidic residues) spans 25–76; that stretch reads DSSKKDDSSKDNQSSDDKSKDSKNDDKKNNDSDKDKDNNSDSDKNSDSKSDD. Over residues 91–169 the composition is skewed to low complexity; that stretch reads SDNASGSDSS…DANNGASSAN (79 aa).

The protein localises to the cell membrane. This is an uncharacterized protein from Staphylococcus saprophyticus subsp. saprophyticus (strain ATCC 15305 / DSM 20229 / NCIMB 8711 / NCTC 7292 / S-41).